Here is a 317-residue protein sequence, read N- to C-terminus: MSNQYGDKNLKIFSLNSNPELAKEIADIVGVQLGKCSVTRFSDGEVQINIEESIRGCDCYIIQSTSDPVNEHIMELLIMVDALKRASAKTINIVIPYYGYARQDRKARSREPITAKLFANLLETAGATRVIALDLHAPQIQGFFDIPIDHLMGVPILGEYFEGKNLEDIVIVSPDHGGVTRARKLADRLKAPIAIIDKRRPRPNVAEVMNIVGNIEGKTAILIDDIIDTAGTITLAANALVENGAKEVYACCTHPVLSGPAVERINNSTIKELVVTNSIKLPEEKKIERFKQLSVGPLLAEAIIRVHEQQSVSYLFS.

ATP is bound by residues 43-45 (DGE) and 102-103 (RQ). ADP-binding residues include Lys-106 and Arg-110. His-136 is a Mg(2+) binding site. Residues Gln-141 and 149–150 (DH) each bind ADP. Asp-175 is a Mg(2+) binding site. The active site involves Lys-198. Residues Arg-200, Asp-224, and 228–232 (DTAGT) contribute to the D-ribose 5-phosphate site. 311–313 (SVS) lines the ADP pocket.

The protein belongs to the ribose-phosphate pyrophosphokinase family. Class I subfamily. Homohexamer; trimer of dimers. Mg(2+) serves as cofactor.

The protein localises to the cytoplasm. The enzyme catalyses D-ribose 5-phosphate + ATP = 5-phospho-alpha-D-ribose 1-diphosphate + AMP + H(+). It participates in metabolic intermediate biosynthesis; 5-phospho-alpha-D-ribose 1-diphosphate biosynthesis; 5-phospho-alpha-D-ribose 1-diphosphate from D-ribose 5-phosphate (route I): step 1/1. Activated by inorganic phosphate, and to a lesser extent by sulfate ions. In addition to form a complex with ATP, Mg(2+) also acts as a cofactor. Strongly inhibited by ADP through competitive binding at the activation site and at a specific allosteric site. Less strongly inhibited by alpha,beta-methylene ATP (mADP), AMP, GDP, GMP and UTP. Functionally, involved in the biosynthesis of the central metabolite phospho-alpha-D-ribosyl-1-pyrophosphate (PRPP) via the transfer of pyrophosphoryl group from ATP to 1-hydroxyl of ribose-5-phosphate (Rib-5-P). This Bacillus subtilis (strain 168) protein is Ribose-phosphate pyrophosphokinase.